The following is a 509-amino-acid chain: Phosphoenolpyruvate carboxylase (509 aa).

It belongs to the PEPCase type 2 family. In terms of assembly, homotetramer. Requires Mg(2+) as cofactor.

The enzyme catalyses oxaloacetate + phosphate = phosphoenolpyruvate + hydrogencarbonate. Functionally, catalyzes the irreversible beta-carboxylation of phosphoenolpyruvate (PEP) to form oxaloacetate (OAA), a four-carbon dicarboxylic acid source for the tricarboxylic acid cycle. In Metallosphaera sedula (strain ATCC 51363 / DSM 5348 / JCM 9185 / NBRC 15509 / TH2), this protein is Phosphoenolpyruvate carboxylase.